Here is a 288-residue protein sequence, read N- to C-terminus: 3-methyl-2-oxobutanoate hydroxymethyltransferase (288 aa).

Mg(2+)-binding residues include Asp-48 and Asp-87. 3-methyl-2-oxobutanoate-binding positions include 48–49 (DS), Asp-87, and Lys-116. Glu-118 serves as a coordination point for Mg(2+). Glu-185 functions as the Proton acceptor in the catalytic mechanism.

Belongs to the PanB family. Homodecamer; pentamer of dimers. It depends on Mg(2+) as a cofactor.

Its subcellular location is the cytoplasm. The catalysed reaction is 3-methyl-2-oxobutanoate + (6R)-5,10-methylene-5,6,7,8-tetrahydrofolate + H2O = 2-dehydropantoate + (6S)-5,6,7,8-tetrahydrofolate. It functions in the pathway cofactor biosynthesis; coenzyme A biosynthesis. Catalyzes the reversible reaction in which hydroxymethyl group from 5,10-methylenetetrahydrofolate is transferred onto alpha-ketoisovalerate to form ketopantoate. The protein is 3-methyl-2-oxobutanoate hydroxymethyltransferase of Hyperthermus butylicus (strain DSM 5456 / JCM 9403 / PLM1-5).